An 828-amino-acid polypeptide reads, in one-letter code: Putative alpha-1,3-mannosyltransferase MNN12 (828 aa).

The Cytoplasmic portion of the chain corresponds to methionine 1–lysine 13. A helical transmembrane segment spans residues valine 14 to asparagine 34. The Lumenal portion of the chain corresponds to tyrosine 35 to glutamate 828. Residue asparagine 38 is glycosylated (N-linked (GlcNAc...) asparagine). The segment at histidine 80 to asparagine 104 is disordered. Polar residues predominate over residues proline 86–lysine 103. Asparagine 247, asparagine 437, and asparagine 591 each carry an N-linked (GlcNAc...) asparagine glycan.

Belongs to the MNN1/MNT family.

It is found in the golgi apparatus membrane. It participates in protein modification; protein glycosylation. Functionally, responsible for addition of the terminal mannose residues to the outer chain of core N-linked polysaccharides and to O-linked mannotriose. Implicated in late Golgi modifications. In Candida albicans (strain SC5314 / ATCC MYA-2876) (Yeast), this protein is Putative alpha-1,3-mannosyltransferase MNN12 (MNN12).